We begin with the raw amino-acid sequence, 215 residues long: Phosphatidylserine decarboxylase proenzyme (215 aa).

Serine 185 serves as the catalytic Schiff-base intermediate with substrate; via pyruvic acid. Residue serine 185 is modified to Pyruvic acid (Ser); by autocatalysis.

It belongs to the phosphatidylserine decarboxylase family. PSD-A subfamily. Heterodimer of a large membrane-associated beta subunit and a small pyruvoyl-containing alpha subunit. Pyruvate serves as cofactor. In terms of processing, is synthesized initially as an inactive proenzyme. Formation of the active enzyme involves a self-maturation process in which the active site pyruvoyl group is generated from an internal serine residue via an autocatalytic post-translational modification. Two non-identical subunits are generated from the proenzyme in this reaction, and the pyruvate is formed at the N-terminus of the alpha chain, which is derived from the carboxyl end of the proenzyme. The post-translation cleavage follows an unusual pathway, termed non-hydrolytic serinolysis, in which the side chain hydroxyl group of the serine supplies its oxygen atom to form the C-terminus of the beta chain, while the remainder of the serine residue undergoes an oxidative deamination to produce ammonia and the pyruvoyl prosthetic group on the alpha chain.

The protein resides in the cell membrane. The enzyme catalyses a 1,2-diacyl-sn-glycero-3-phospho-L-serine + H(+) = a 1,2-diacyl-sn-glycero-3-phosphoethanolamine + CO2. Its pathway is phospholipid metabolism; phosphatidylethanolamine biosynthesis; phosphatidylethanolamine from CDP-diacylglycerol: step 2/2. Its function is as follows. Catalyzes the formation of phosphatidylethanolamine (PtdEtn) from phosphatidylserine (PtdSer). The sequence is that of Phosphatidylserine decarboxylase proenzyme from Streptomyces avermitilis (strain ATCC 31267 / DSM 46492 / JCM 5070 / NBRC 14893 / NCIMB 12804 / NRRL 8165 / MA-4680).